A 1024-amino-acid polypeptide reads, in one-letter code: Non-canonical nonribosomal peptide synthetase FrzA (1024 aa).

Residues 29 to 425 (RAQKSHQAIA…GRRDHQVKVR (397 aa)) are adenylation (A) domain. One can recognise a Carrier domain in the interval 534–611 (NASQDVRSAL…ALTSIIKQRL (78 aa)). Ser-571 bears the O-(pantetheine 4'-phosphoryl)serine mark. Residues 655 to 898 (LTGGTGFVGA…VPVDYVNAAI (244 aa)) form the Thioester reductase (TE) domain.

The protein belongs to the NRP synthetase family. It depends on pantetheine 4'-phosphate as a cofactor.

The enzyme catalyses L-tyrosinal + AMP + diphosphate + NADP(+) = L-tyrosine + ATP + NADPH + H(+). It participates in secondary metabolite biosynthesis. In terms of biological role, non-canonical nonribosomal peptide synthetase; part of the gene cluster that mediates the biosynthesis of the alkaloid (-)-FR901483, a potent immunosuppressant that shows efficacy in animal models and a probable inhibitor of purine nucleotide biosynthesis by targeting phosphoribosylpyrophosphate amidotransferase (PPAT). Within the pathway, FrzA catalyzes the reduction of L-tyrosine via its C-terminal reductase domain to produce L-tyrosinal. The biosynthesis of (-)-FR901483 starts with the condensation of two L-tyrosines to yield (S,S)-dityrosyl-piperazine. This process occurs in 3 steps with the non-canonical nonribosomal peptide synthetase FrzA catalyzing the reduction of L-tyrosine into L-tyrosinal, the spontaneous condensation of 2 L-tyrosinal units, and the subsequent reduction by the NmrA-like family domain-containing oxidoreductase FrzB. The cytochrome P450 monooxygenase FrzC then performs coupling between N10 and C1' to morph the piperazine into a 1,4-diazabicyclo[3.2.1]octane spiro-fused to a 2,5-cyclohexadienone. The dienone portion is further reduced to cyclohexanone by the flavin-dependent reductase FrzD. The methyltranserases (MTs) FrzE and FrzF are then involved in the methylation at the C10' amine and the C4 phenolic oxygen, respectively. The order of the two MTs appear to be interchangeable. Cleavage of the C9-N10' bond by the dioxygenase FrzG then leads to formation of a conjugated iminium. In addition to the oxidation of C9, an additional dehydrogenation between C7 and C8 can occur to give a likely shunt product. The next biosynthetic step is the intramolecular aldol condensation catalyzed by the newly identified aldolase FrzH to yield an aza-tricyclic product with the formation of a C9-C3' bond. The short-chain dehydrogenase/reductase FrzI then produces dephospho-(-)-FR901483 that is phosphorylated at C4'-OH into (-)-FR901483 by the phosphotransferase FrzJ. The protein is Non-canonical nonribosomal peptide synthetase FrzA of Cladobotryum sp.